The primary structure comprises 817 residues: MSKTEEPASGPPSKDRPEARAAWLRAELNRYAHEYYVLDQPSVPDVEYDRLYRELEALETEHPELKTPDSPTLRVGGAVLPEFAAVRHVIPMLSIRTETDTTANGARAFDASVRRELGLDDTDPPVEYAAELKFDGLAINLRYERGYLVQAATRGDGTTGEDVTQNIRTIRQIPLGLSPVDGHVPDVLEVRGEVYMRRDDFEKLNARQRERGDKTFVNPRNTAAGAVRQLDPKMAAERPLSFFAYGLGEVAGWKGMPGTHSSMLDVLQAFGFPVSNERAAVAGGEGLVRFHEAIRAKRDSLPFDIDGVVYKVNSLALQRELGFRSREPRWAVAHKYPAQEALTTVESIDVQVGRTGAITPVARLVPVFVGGVTVTNATLHNEDEVRRKDVRVGDTVIVRRAGDVIPEVVSVVLDRRPLDDVPGSDLFNPQQQPKYPPFELPKTCPVCGSHVVREEGEAVARCSGGLFCSAQRKEAIRHFAGRRMMDIEGLGERYIDNLVELDYVHGIADLYKLTLEDFLEMKRRADERDGVTPETVSAGKIATKWAENLLEGIQASKTPPLARFLFALGIRHVGESTAKTLADWLGSLAMIRRAPAPLLLALPDVGATVAEAIADFFAEPKNQQALDALLEAGVAPQGEHAPNAKLREKLEPAELYATLGVPKLTATRAKQLAVAAPTLAQLASVEPDQLAGLPADVTASLLEWLASHDHRAQLAKLDALRGELLAAMPAEAAEEGVLDGKTVVLTGTLPNLTRDEAKAMLEAAGAKVSGSVSKKTDYVVAGEDAGSKLAKAEELNVKVLDEAGMLALLKKPAGDQA.

NAD(+) contacts are provided by residues 45-49 (DVEYD), 94-95 (SI), and E131. The active-site N6-AMP-lysine intermediate is the K133. NAD(+) contacts are provided by R154, E193, K311, and K335. Zn(2+) is bound by residues C444, C447, C462, and C468. The 85-residue stretch at 733–817 (AEEGVLDGKT…LLKKPAGDQA (85 aa)) folds into the BRCT domain.

The protein belongs to the NAD-dependent DNA ligase family. LigA subfamily. Mg(2+) serves as cofactor. Mn(2+) is required as a cofactor.

It carries out the reaction NAD(+) + (deoxyribonucleotide)n-3'-hydroxyl + 5'-phospho-(deoxyribonucleotide)m = (deoxyribonucleotide)n+m + AMP + beta-nicotinamide D-nucleotide.. Its function is as follows. DNA ligase that catalyzes the formation of phosphodiester linkages between 5'-phosphoryl and 3'-hydroxyl groups in double-stranded DNA using NAD as a coenzyme and as the energy source for the reaction. It is essential for DNA replication and repair of damaged DNA. This chain is DNA ligase, found in Ralstonia pickettii (strain 12J).